We begin with the raw amino-acid sequence, 132 residues long: Small ribosomal subunit protein uS8 (132 aa).

This sequence belongs to the universal ribosomal protein uS8 family. Part of the 30S ribosomal subunit. Contacts proteins S5 and S12.

In terms of biological role, one of the primary rRNA binding proteins, it binds directly to 16S rRNA central domain where it helps coordinate assembly of the platform of the 30S subunit. The protein is Small ribosomal subunit protein uS8 of Bartonella tribocorum (strain CIP 105476 / IBS 506).